Consider the following 139-residue polypeptide: MLRTMFKSKIHRATVTQADLHYVGSVTIDADLLDAADLLPGELVHIVDITNGARLETYVIEGERGSGVVGINGAAAHLVHPGDLVIIISYAQVSDAEARALRPRVVHVDRDNRVVALGADPAEPVPGSDQARSPQAVTA.

S25 serves as the catalytic Schiff-base intermediate with substrate; via pyruvic acid. S25 is modified (pyruvic acid (Ser)). T57 is a substrate binding site. Catalysis depends on Y58, which acts as the Proton donor. A substrate-binding site is contributed by 73–75; that stretch reads GAA. The tract at residues 117-139 is disordered; that stretch reads LGADPAEPVPGSDQARSPQAVTA. Residues 130–139 are compositionally biased toward polar residues; sequence QARSPQAVTA.

This sequence belongs to the PanD family. In terms of assembly, heterooctamer of four alpha and four beta subunits. Pyruvate is required as a cofactor. Is synthesized initially as an inactive proenzyme, which is activated by self-cleavage at a specific serine bond to produce a beta-subunit with a hydroxyl group at its C-terminus and an alpha-subunit with a pyruvoyl group at its N-terminus.

The protein localises to the cytoplasm. It catalyses the reaction L-aspartate + H(+) = beta-alanine + CO2. It participates in cofactor biosynthesis; (R)-pantothenate biosynthesis; beta-alanine from L-aspartate: step 1/1. Functionally, catalyzes the pyruvoyl-dependent decarboxylation of aspartate to produce beta-alanine. This chain is Aspartate 1-decarboxylase, found in Streptomyces avermitilis (strain ATCC 31267 / DSM 46492 / JCM 5070 / NBRC 14893 / NCIMB 12804 / NRRL 8165 / MA-4680).